The sequence spans 48 residues: Small polypeptide DEVIL 14 (48 aa).

Residues 4 to 23 (TVVLRCCTSVTKVRTWKRCS) traverse the membrane as a helical segment. A required for DVL/RTFL small polypeptide activity region spans residues 17–48 (RTWKRCSKQIKEQRARLYIIWKCAVFLLSSHD).

Belongs to the DVL/RTFL small polypeptides family.

It localises to the cell membrane. Its function is as follows. Small polypeptide acting as a regulatory molecule which coordinates cellular responses required for differentiation, growth and development, probably by restricting polar cell proliferation in lateral organs and coordinating socket cell recruitment and differentiation at trichome sites. The chain is Small polypeptide DEVIL 14 from Arabidopsis thaliana (Mouse-ear cress).